Reading from the N-terminus, the 434-residue chain is Putative nuclease OPG089 (434 aa).

It belongs to the XPG/RAD2 endonuclease family. FEN1 subfamily. The cofactor is Mg(2+).

It is found in the virion. In terms of biological role, putative nuclease that seems to be required for double-strand break repair, homologous recombination, and production of full-length viral genomic DNA. This Monkeypox virus protein is Putative nuclease OPG089 (OPG089).